The following is a 275-amino-acid chain: Pyridoxal phosphate homeostasis protein (275 aa).

S6 carries the phosphoserine modification. K47 is subject to N6-(pyridoxal phosphate)lysine. Y69 is modified (phosphotyrosine). Position 125 is an N6-succinyllysine (K125). 2 positions are modified to phosphoserine: S226 and S244. The segment covering 251–263 (DYSKKPTPDKCAA) has biased composition (basic and acidic residues). The segment at 251–275 (DYSKKPTPDKCAADVKAPLEVAQEH) is disordered.

It belongs to the pyridoxal phosphate-binding protein YggS/PROSC family. In terms of tissue distribution, ubiquitous.

Its function is as follows. Pyridoxal 5'-phosphate (PLP)-binding protein, which may be involved in intracellular homeostatic regulation of pyridoxal 5'-phosphate (PLP), the active form of vitamin B6. This is Pyridoxal phosphate homeostasis protein from Homo sapiens (Human).